Consider the following 238-residue polypeptide: Succinate dehydrogenase iron-sulfur subunit (238 aa).

Positions 8–97 (YRYNPDVDDA…KIVIRPLPGL (90 aa)) constitute a 2Fe-2S ferredoxin-type domain. 3 residues coordinate [2Fe-2S] cluster: C55, C60, and C75. Residues 139 to 169 (QREKLDGLYECILCACCSTSCPSFWWNPDKF) form the 4Fe-4S ferredoxin-type domain. Residues C149, C152, and C155 each coordinate [4Fe-4S] cluster. [3Fe-4S] cluster is bound at residue C159. A ubiquinone is bound at residue W164. [3Fe-4S] cluster contacts are provided by C206 and C212. Position 216 (C216) interacts with [4Fe-4S] cluster.

This sequence belongs to the succinate dehydrogenase/fumarate reductase iron-sulfur protein family. As to quaternary structure, part of an enzyme complex containing four subunits: a flavoprotein, an iron-sulfur, cytochrome b-556, and a hydrophobic anchor protein. The complex forms trimers. Requires [2Fe-2S] cluster as cofactor. [3Fe-4S] cluster serves as cofactor. It depends on [4Fe-4S] cluster as a cofactor.

The protein resides in the cell inner membrane. The catalysed reaction is a quinone + succinate = fumarate + a quinol. Its pathway is carbohydrate metabolism; tricarboxylic acid cycle; fumarate from succinate (bacterial route): step 1/1. Functionally, two distinct, membrane-bound, FAD-containing enzymes are responsible for the catalysis of fumarate and succinate interconversion; the fumarate reductase is used in anaerobic growth, and the succinate dehydrogenase is used in aerobic growth. This chain is Succinate dehydrogenase iron-sulfur subunit (sdhB), found in Escherichia coli (strain K12).